The following is a 203-amino-acid chain: Guanylate kinase (203 aa).

Residues 3 to 181 (GTLYIVSAPS…ALDDLKAIFR (179 aa)) form the Guanylate kinase-like domain. 10-17 (APSGAGKT) contacts ATP.

It belongs to the guanylate kinase family.

It localises to the cytoplasm. It catalyses the reaction GMP + ATP = GDP + ADP. Essential for recycling GMP and indirectly, cGMP. This chain is Guanylate kinase (gmk), found in Pseudomonas aeruginosa (strain ATCC 15692 / DSM 22644 / CIP 104116 / JCM 14847 / LMG 12228 / 1C / PRS 101 / PAO1).